The following is a 466-amino-acid chain: Alpha-1A adrenergic receptor (466 aa).

The Extracellular segment spans residues 1–27 (MVFLSGNASDSSNCTQPPAPVNISKAI). N-linked (GlcNAc...) asparagine glycans are attached at residues Asn7, Asn13, and Asn22. Residues 28 to 51 (LLGVILGGLILFGVLGNILVILSV) form a helical membrane-spanning segment. At 52–64 (ACHRHLHSVTHYY) the chain is on the cytoplasmic side. Residues 65–88 (IVNLAVADLLLTSTVLPFSAIFEV) traverse the membrane as a helical segment. Residues 89-99 (LGYWAFGRVFC) are Extracellular-facing. Cys99 and Cys176 are oxidised to a cystine. The helical transmembrane segment at 100-122 (NIWAAVDVLCCTASIMGLCIISI) threads the bilayer. At 123-143 (DRYIGVSYPLRYPTIVTQRRG) the chain is on the cytoplasmic side. A helical membrane pass occupies residues 144-167 (LMALLCVWALSLVISIGPLFGWRQ). Topologically, residues 168–181 (PAPEDETICQINEE) are extracellular. Residues 182-205 (PGYVLFSALGSFYLPLAIILVMYC) form a helical membrane-spanning segment. Residues 206-273 (RVYVVAKRES…FSREKKAAKT (68 aa)) lie on the Cytoplasmic side of the membrane. The residue at position 215 (Ser215) is a Phosphoserine; by PKA. A helical membrane pass occupies residues 274 to 297 (LGIVVGCFVLCWLPFFLVMPIGSF). Residues 298 to 305 (FPDFKPSE) are Extracellular-facing. The chain crosses the membrane as a helical span at residues 306–329 (TVFKIVFWLGYLNSCINPIIYPCS). The Cytoplasmic segment spans residues 330–466 (SQEFKKAFQN…ISLSENGEEV (137 aa)). Residues 334-349 (KKAFQNVLRIQCLCRK) carry the Nuclear localization signal motif. Residue Cys345 is the site of S-palmitoyl cysteine attachment.

The protein belongs to the G-protein coupled receptor 1 family. Adrenergic receptor subfamily. ADRA1A sub-subfamily. In terms of assembly, homo- and heterooligomer. Heterooligomerizes with ADRA1B homooligomers in cardiac myocytes. Interacts with CAVIN4. In terms of processing, C-terminal Ser or Thr residues may be phosphorylated. As to expression, expressed in heart, brain, liver and prostate, but not in kidney, lung, adrenal, aorta and pituitary. Within the prostate, expressed in the apex, base, periurethral and lateral lobe. Isoform 4 is the most abundant isoform expressed in the prostate with high levels also detected in liver and heart.

The protein resides in the nucleus membrane. It localises to the cell membrane. It is found in the cytoplasm. Its subcellular location is the membrane. The protein localises to the caveola. In terms of biological role, this alpha-adrenergic receptor mediates its action by association with G proteins that activate a phosphatidylinositol-calcium second messenger system. Its effect is mediated by G(q) and G(11) proteins. Nuclear ADRA1A-ADRA1B heterooligomers regulate phenylephrine(PE)-stimulated ERK signaling in cardiac myocytes. This Homo sapiens (Human) protein is Alpha-1A adrenergic receptor (ADRA1A).